We begin with the raw amino-acid sequence, 345 residues long: Nuclear egress protein 1 (345 aa).

The CCCH-type zinc finger occupies 115 to 247; the sequence is CISLSEMGYT…FVFKPGSPLH (133 aa).

It belongs to the herpesviridae NEC1 protein family. In terms of assembly, forms a heterohexameric complex with NEC2. Interacts with capsid vertex specific component 2/CVC2; this interaction directs the capsid to the host inner nuclear membrane to initiate budding. Post-translationally, phosphorylated at serine residues in the N-terminus. This phosphorylation regulates the localization within the inner nuclear membrane.

It localises to the host nucleus inner membrane. Its function is as follows. Plays an essential role in virion nuclear egress, the first step of virion release from infected cell. Within the host nucleus, NEC1 interacts with the newly formed capsid through the vertexes and directs it to the inner nuclear membrane by associating with NEC2. Induces the budding of the capsid at the inner nuclear membrane as well as its envelopment into the perinuclear space. There, the NEC1/NEC2 complex promotes the fusion of the enveloped capsid with the outer nuclear membrane and the subsequent release of the viral capsid into the cytoplasm where it will reach the secondary budding sites in the host Golgi or trans-Golgi network. The polypeptide is Nuclear egress protein 1 (Psittacid herpesvirus 1 (isolate Amazon parrot/-/97-0001/1997) (PsHV-1)).